A 268-amino-acid chain; its full sequence is HLA class II histocompatibility antigen, DQ beta 2 chain (268 aa).

An N-terminal signal peptide occupies residues methionine 1 to alanine 32. A beta-1 region spans residues arginine 33–valine 126. At arginine 33–lysine 229 the chain is on the extracellular side. 2 disulfide bridges follow: cysteine 47/cysteine 110 and cysteine 148/cysteine 204. The N-linked (GlcNAc...) asparagine glycan is linked to asparagine 51. A beta-2 region spans residues glutamate 127–lysine 229. Residues proline 128–threonine 216 enclose the Ig-like C1-type domain. Residues methionine 230–isoleucine 250 traverse the membrane as a helical segment. The Cytoplasmic portion of the chain corresponds to arginine 251–histidine 268.

Belongs to the MHC class II family. Heterodimer of an alpha and a beta subunit; also referred as MHC class II molecule. Dimer formation with HLA-DQA2, but not with HLA-DQA1, is required for efficient exit from the endoplasmic reticulum (ER). In the ER, forms a heterononamer; 3 MHC class II molecules bind to a CD74 homotrimer (also known as invariant chain or HLA class II histocompatibility antigen gamma chain). In the endosomal/lysosomal system; CD74 undergoes sequential degradation by various proteases; leaving a small fragment termed CLIP on each MHC class II molecule. MHC class II molecule interacts with HLA_DM, and HLA_DO in B-cells, in order to release CLIP and facilitate the binding of antigenic peptides. Association with HLA-DMA also occurs in skin Langerhans cells, in post-Golgi compartments. In terms of tissue distribution, restricted to skin Langerhans cells (at protein level).

The protein localises to the cell membrane. Its subcellular location is the endoplasmic reticulum membrane. The protein resides in the golgi apparatus. It localises to the trans-Golgi network membrane. It is found in the endosome membrane. The protein localises to the lysosome membrane. Its function is as follows. Binds peptides derived from antigens that access the endocytic route of antigen presenting cells (APC) and presents them on the cell surface for recognition by the CD4 T-cells. The peptide binding cleft accommodates peptides of 10-30 residues. The peptides presented by MHC class II molecules are generated mostly by degradation of proteins that access the endocytic route, where they are processed by lysosomal proteases and other hydrolases. Exogenous antigens that have been endocytosed by the APC are thus readily available for presentation via MHC II molecules, and for this reason this antigen presentation pathway is usually referred to as exogenous. As membrane proteins on their way to degradation in lysosomes as part of their normal turn-over are also contained in the endosomal/lysosomal compartments, exogenous antigens must compete with those derived from endogenous components. Autophagy is also a source of endogenous peptides, autophagosomes constitutively fuse with MHC class II loading compartments. In addition to APCs, other cells of the gastrointestinal tract, such as epithelial cells, express MHC class II molecules and CD74 and act as APCs, which is an unusual trait of the GI tract. To produce a MHC class II molecule that presents an antigen, three MHC class II molecules (heterodimers of an alpha and a beta chain) associate with a CD74 trimer in the ER to form a heterononamer. Soon after the entry of this complex into the endosomal/lysosomal system where antigen processing occurs, CD74 undergoes a sequential degradation by various proteases, including CTSS and CTSL, leaving a small fragment termed CLIP (class-II-associated invariant chain peptide). The removal of CLIP is facilitated by HLA-DM via direct binding to the alpha-beta-CLIP complex so that CLIP is released. HLA-DM stabilizes MHC class II molecules until primary high affinity antigenic peptides are bound. The MHC II molecule bound to a peptide is then transported to the cell membrane surface. In B-cells, the interaction between HLA-DM and MHC class II molecules is regulated by HLA-DO. Primary dendritic cells (DCs) also to express HLA-DO. Lysosomal microenvironment has been implicated in the regulation of antigen loading into MHC II molecules, increased acidification produces increased proteolysis and efficient peptide loading. The chain is HLA class II histocompatibility antigen, DQ beta 2 chain (HLA-DQB2) from Homo sapiens (Human).